The sequence spans 94 residues: Integration host factor subunit beta (94 aa).

It belongs to the bacterial histone-like protein family. As to quaternary structure, heterodimer of an alpha and a beta chain.

Functionally, this protein is one of the two subunits of integration host factor, a specific DNA-binding protein that functions in genetic recombination as well as in transcriptional and translational control. The polypeptide is Integration host factor subunit beta (Brucella melitensis biotype 2 (strain ATCC 23457)).